Here is a 234-residue protein sequence, read N- to C-terminus: Cysteine proteinase inhibitor 6 (234 aa).

A signal peptide spans 1–24; that stretch reads MMRSRFLLFIVFFSLSLFISSLIA. N-acetylalanine is present on Met-2. Cystatin domains are found at residues 38-126 and 145-215; these read GGVG…KPAS and SGWR…FKVE. Residues 82–86 carry the Secondary area of contact motif; that stretch reads QVVAG. The segment at 133–154 is disordered; sequence SSDLGCKQGEHESGWREVPGDD. Positions 140–154 are enriched in basic and acidic residues; it reads QGEHESGWREVPGDD. Position 174 is a phosphoserine (Ser-174).

The protein belongs to the cystatin family. Phytocystatin subfamily.

It localises to the secreted. Functionally, specific inhibitor of cysteine proteinases. Probably involved in the regulation of endogenous processes and in defense against pests and pathogens. This Arabidopsis thaliana (Mouse-ear cress) protein is Cysteine proteinase inhibitor 6 (CYS6).